The sequence spans 512 residues: 2,3-bisphosphoglycerate-independent phosphoglycerate mutase (512 aa).

The Mn(2+) site is built by D18 and S68. S68 (phosphoserine intermediate) is an active-site residue. Substrate contacts are provided by residues H129, 159–160 (RD), R191, R197, 265–268 (RPDR), and K338. Residues D403, H407, D444, H445, and H462 each contribute to the Mn(2+) site.

It belongs to the BPG-independent phosphoglycerate mutase family. Monomer. Requires Mn(2+) as cofactor.

The enzyme catalyses (2R)-2-phosphoglycerate = (2R)-3-phosphoglycerate. Its pathway is carbohydrate degradation; glycolysis; pyruvate from D-glyceraldehyde 3-phosphate: step 3/5. Its function is as follows. Catalyzes the interconversion of 2-phosphoglycerate and 3-phosphoglycerate. This Mesomycoplasma hyopneumoniae (strain 232) (Mycoplasma hyopneumoniae) protein is 2,3-bisphosphoglycerate-independent phosphoglycerate mutase.